Here is a 114-residue protein sequence, read N- to C-terminus: Large ribosomal subunit protein bL19 (114 aa).

It belongs to the bacterial ribosomal protein bL19 family.

In terms of biological role, this protein is located at the 30S-50S ribosomal subunit interface and may play a role in the structure and function of the aminoacyl-tRNA binding site. The protein is Large ribosomal subunit protein bL19 of Acidithiobacillus ferrooxidans (strain ATCC 23270 / DSM 14882 / CIP 104768 / NCIMB 8455) (Ferrobacillus ferrooxidans (strain ATCC 23270)).